A 348-amino-acid chain; its full sequence is Methylthioribose-1-phosphate isomerase (348 aa).

Substrate-binding positions include 48-50, R90, and Q195; that span reads RGA. D236 serves as the catalytic Proton donor. Position 246–247 (246–247) interacts with substrate; that stretch reads NK.

It belongs to the eIF-2B alpha/beta/delta subunits family. MtnA subfamily.

It carries out the reaction 5-(methylsulfanyl)-alpha-D-ribose 1-phosphate = 5-(methylsulfanyl)-D-ribulose 1-phosphate. It participates in amino-acid biosynthesis; L-methionine biosynthesis via salvage pathway; L-methionine from S-methyl-5-thio-alpha-D-ribose 1-phosphate: step 1/6. Its function is as follows. Catalyzes the interconversion of methylthioribose-1-phosphate (MTR-1-P) into methylthioribulose-1-phosphate (MTRu-1-P). The sequence is that of Methylthioribose-1-phosphate isomerase from Exiguobacterium sibiricum (strain DSM 17290 / CCUG 55495 / CIP 109462 / JCM 13490 / 255-15).